Reading from the N-terminus, the 143-residue chain is Endoribonuclease YbeY (143 aa).

Residues His-109, His-113, and His-119 each contribute to the Zn(2+) site.

The protein belongs to the endoribonuclease YbeY family. Zn(2+) serves as cofactor.

The protein resides in the cytoplasm. Its function is as follows. Single strand-specific metallo-endoribonuclease involved in late-stage 70S ribosome quality control and in maturation of the 3' terminus of the 16S rRNA. The protein is Endoribonuclease YbeY of Carboxydothermus hydrogenoformans (strain ATCC BAA-161 / DSM 6008 / Z-2901).